Reading from the N-terminus, the 250-residue chain is Cyclin-Q (250 aa).

Met-1 carries the post-translational modification N-acetylmethionine. Basic and acidic residues predominate over residues 1 to 10; the sequence is MEAVRPDSCE. The segment at 1–22 is disordered; that stretch reads MEAVRPDSCERGTAAARAEERP.

Belongs to the cyclin family. Cyclin-like FAM58 subfamily. As to quaternary structure, associates with CDK10 to promote its kinase activity.

Activating cyclin for the cyclin-associated kinase CDK10. The sequence is that of Cyclin-Q (Ccnq) from Rattus norvegicus (Rat).